Consider the following 679-residue polypeptide: tRNA uridine 5-carboxymethylaminomethyl modification enzyme MnmG (679 aa).

13-18 lines the FAD pocket; the sequence is GGGHAG. Position 280-294 (280-294) interacts with NAD(+); it reads GPRYCPSVEDKINRF.

It belongs to the MnmG family. In terms of assembly, homodimer. Heterotetramer of two MnmE and two MnmG subunits. Requires FAD as cofactor.

It is found in the cytoplasm. Its function is as follows. NAD-binding protein involved in the addition of a carboxymethylaminomethyl (cmnm) group at the wobble position (U34) of certain tRNAs, forming tRNA-cmnm(5)s(2)U34. The sequence is that of tRNA uridine 5-carboxymethylaminomethyl modification enzyme MnmG from Albidiferax ferrireducens (strain ATCC BAA-621 / DSM 15236 / T118) (Rhodoferax ferrireducens).